A 76-amino-acid polypeptide reads, in one-letter code: MRTLALHTAMLLLVALHAQAEARQARADEAAAQQQPGADDQGMAHSFTWPENAALPLSESERGLRCICVLGICRLL.

The signal sequence occupies residues 1–22 (MRTLALHTAMLLLVALHAQAEA). The propeptide occupies 23–64 (RQARADEAAAQQQPGADDQGMAHSFTWPENAALPLSESERGL). Residues 25–45 (ARADEAAAQQQPGADDQGMAH) form a disordered region. Residues 30 to 44 (AAAQQQPGADDQGMA) show a composition bias toward low complexity. A disulfide bridge links Cys-68 with Cys-73. A propeptide spanning residues 74–76 (RLL) is cleaved from the precursor.

This sequence belongs to the alpha-defensin family. Theta subfamily. As to quaternary structure, forms a cyclic homodimer; disulfide-linked. This is a cyclic peptide.

Functionally, has antimicrobial activities against bacteria and fungi. This chain is Demidefensin-3, found in Macaca mulatta (Rhesus macaque).